The following is a 163-amino-acid chain: MAKKKKAKNSNPVIASNRKARHDYKILDTFECGIVLLGTEIKSIREGKVSLTDSFATIDEGEAWIRNLNIPIYSRGSWTNHSPMRTRKLLLHRREIDSLMGKVRDGNKTLVPLSLYFKEGRLKVELGLAQGKQDYDKRQDIKRRTEEREVVRDLGRRVKGIHA.

This sequence belongs to the SmpB family.

It is found in the cytoplasm. Required for rescue of stalled ribosomes mediated by trans-translation. Binds to transfer-messenger RNA (tmRNA), required for stable association of tmRNA with ribosomes. tmRNA and SmpB together mimic tRNA shape, replacing the anticodon stem-loop with SmpB. tmRNA is encoded by the ssrA gene; the 2 termini fold to resemble tRNA(Ala) and it encodes a 'tag peptide', a short internal open reading frame. During trans-translation Ala-aminoacylated tmRNA acts like a tRNA, entering the A-site of stalled ribosomes, displacing the stalled mRNA. The ribosome then switches to translate the ORF on the tmRNA; the nascent peptide is terminated with the 'tag peptide' encoded by the tmRNA and targeted for degradation. The ribosome is freed to recommence translation, which seems to be the essential function of trans-translation. This Corynebacterium diphtheriae (strain ATCC 700971 / NCTC 13129 / Biotype gravis) protein is SsrA-binding protein.